The sequence spans 503 residues: MALRAKAEVCVAAPWLSLQRARALGTRAARAPRTVLPFEAMPQHPGNRWLRLLQIWREQGYEHLHLEMHQTFQELGPIFRYNLGGPRMVCVMLPEDVEKLQQVDSLHPCRMILEPWVAYRQHRGHKCGVFLLNGPEWRFNRLRLNPDVLSPKAVQRFLPMVDAVARDFSQALKKKVLQNARGSLTLDVQPSIFHYTIEASNLALFGERLGLVGHSPSSASLNFLHALEVMFKSTVQLMFMPRSLSRWISPKVWKEHFEAWDCIFQYGDNCIQKIYQELAFNRPQHYTGIVAELLLKAELSLEAIKANSMELTAGSVDTTAFPLLMTLFELARNPDVQQILRQESLAAAASISEHPQKATTELPLLRAALKETLRLYPVGLFLERVVSSDLVLQNYHIPAGTLVQVFLYSLGRNAALFPRPERYNPQRWLDIRGSGRNFHHVPFGFGMRQCLGRRLAEAEMLLLLHHVLKHFLVETLTQEDIKMVYSFILRPGTSPLLTFRAIN.

The N-terminal 24 residues, 1–24 (MALRAKAEVCVAAPWLSLQRARAL), are a transit peptide targeting the mitochondrion. Residue F381 coordinates 21-hydroxyprogesterone. Residue C450 participates in heme binding.

The protein belongs to the cytochrome P450 family. It depends on heme as a cofactor. In terms of tissue distribution, expressed sporadically in the zona glomerulosa (zG) of the adrenal cortex (conventional zonation), as well as in aldosterone-producing cell clusters (APCCs) composed of morphological zG cells in contact with the capsule (variegated zonation).

The protein localises to the mitochondrion inner membrane. It catalyses the reaction a steroid + 2 reduced [adrenodoxin] + O2 + 2 H(+) = an 11beta-hydroxysteroid + 2 oxidized [adrenodoxin] + H2O. It carries out the reaction 21-hydroxyprogesterone + 2 reduced [adrenodoxin] + O2 + 2 H(+) = corticosterone + 2 oxidized [adrenodoxin] + H2O. The catalysed reaction is corticosterone + 2 reduced [adrenodoxin] + O2 + 2 H(+) = 18-hydroxycorticosterone + 2 oxidized [adrenodoxin] + H2O. The enzyme catalyses 18-hydroxycorticosterone + 2 reduced [adrenodoxin] + O2 + 2 H(+) = aldosterone + 2 oxidized [adrenodoxin] + 2 H2O. It catalyses the reaction 11-deoxycortisol + 2 reduced [adrenodoxin] + O2 + 2 H(+) = cortisol + 2 oxidized [adrenodoxin] + H2O. It carries out the reaction 21-hydroxyprogesterone + 2 reduced [adrenodoxin] + O2 + 2 H(+) = 18-hydroxy-11-deoxycorticosterone + 2 oxidized [adrenodoxin] + H2O. The catalysed reaction is cortisol + 2 reduced [adrenodoxin] + O2 + 2 H(+) = 18-hydroxycortisol + 2 oxidized [adrenodoxin] + H2O. The enzyme catalyses 18-hydroxycortisol + 2 reduced [adrenodoxin] + O2 + 2 H(+) = 18-oxocortisol + 2 oxidized [adrenodoxin] + 2 H2O. Its pathway is steroid biosynthesis. Functionally, a cytochrome P450 monooxygenase that catalyzes the biosynthesis of aldosterone, the main mineralocorticoid in the human body responsible for salt and water homeostasis, thus involved in blood pressure regulation, arterial hypertension, and the development of heart failure. Catalyzes three sequential oxidative reactions of 11-deoxycorticosterone (21-hydroxyprogesterone), namely 11-beta hydroxylation, followed by two successive oxidations at C18 yielding 18-hydroxy and then 18-oxo intermediates (that would not leave the enzyme active site during the consecutive hydroxylation reactions), ending with the formation of aldosterone. Can also produce 18-hydroxycortisol and 18-oxocortisol, derived from successive oxidations of cortisol at C18, normally found at very low levels, but significantly increased in primary aldosteronism, the most common form of secondary hypertension. Mechanistically, uses molecular oxygen inserting one oxygen atom into a substrate and reducing the second into a water molecule. Two electrons are provided by NADPH via a two-protein mitochondrial transfer system comprising flavoprotein FDXR (adrenodoxin/ferredoxin reductase) and nonheme iron-sulfur protein FDX1 or FDX2 (adrenodoxin/ferredoxin). Could also be involved in the androgen metabolic pathway. This Homo sapiens (Human) protein is Cytochrome P450 11B2, mitochondrial.